A 313-amino-acid polypeptide reads, in one-letter code: Ribosomal RNA small subunit methyltransferase H (313 aa).

Residues 35–37 (GGH), D55, F79, D101, and Q108 contribute to the S-adenosyl-L-methionine site.

This sequence belongs to the methyltransferase superfamily. RsmH family.

It is found in the cytoplasm. The catalysed reaction is cytidine(1402) in 16S rRNA + S-adenosyl-L-methionine = N(4)-methylcytidine(1402) in 16S rRNA + S-adenosyl-L-homocysteine + H(+). In terms of biological role, specifically methylates the N4 position of cytidine in position 1402 (C1402) of 16S rRNA. The chain is Ribosomal RNA small subunit methyltransferase H from Edwardsiella ictaluri (strain 93-146).